We begin with the raw amino-acid sequence, 352 residues long: Small ribosomal subunit biogenesis GTPase RsgA (352 aa).

Residues 1–15 are compositionally biased toward basic residues; the sequence is MTKRKLTQNQKRRIH. Residues 1–26 are disordered; that stretch reads MTKRKLTQNQKRRIHSNNVKALDRHH. A CP-type G domain is found at 106–274; sequence ENEIARPDYY…LIDSPGIREF (169 aa). Residues 162–165 and 216–224 each bind GTP; these read NKVD and GQSGVGKSS. Residues Cys298, Cys303, His305, and Cys311 each contribute to the Zn(2+) site.

It belongs to the TRAFAC class YlqF/YawG GTPase family. RsgA subfamily. As to quaternary structure, monomer. Associates with 30S ribosomal subunit, binds 16S rRNA. Zn(2+) serves as cofactor.

It is found in the cytoplasm. Its function is as follows. One of several proteins that assist in the late maturation steps of the functional core of the 30S ribosomal subunit. Helps release RbfA from mature subunits. May play a role in the assembly of ribosomal proteins into the subunit. Circularly permuted GTPase that catalyzes slow GTP hydrolysis, GTPase activity is stimulated by the 30S ribosomal subunit. The sequence is that of Small ribosomal subunit biogenesis GTPase RsgA from Mannheimia succiniciproducens (strain KCTC 0769BP / MBEL55E).